A 122-amino-acid polypeptide reads, in one-letter code: Large-conductance mechanosensitive channel (122 aa).

2 helical membrane-spanning segments follow: residues Phe29–Phe49 and Gly66–Ile86.

Belongs to the MscL family. In terms of assembly, homopentamer.

It localises to the cell membrane. Functionally, channel that opens in response to stretch forces in the membrane lipid bilayer. May participate in the regulation of osmotic pressure changes within the cell. In Macrococcus caseolyticus (strain JCSC5402) (Macrococcoides caseolyticum), this protein is Large-conductance mechanosensitive channel.